The following is a 2374-amino-acid chain: Genome polyprotein (2374 aa).

G115 is lipidated: N-myristoyl glycine; by host. Disordered stretches follow at residues 144–176 and 707–739; these read GDMP…GNVV and GADG…FDYP. Low complexity predominate over residues 157 to 174; the sequence is GSNKGGSSTSPKSTSNGN. Polar residues predominate over residues 716–728; that stretch reads APTSDLSDGNPTT. The region spanning 1361–1525 is the SF3 helicase domain; that stretch reads YSTALSAISL…VAFSAAAALQ (165 aa). Residue 1387–1394 coordinates ATP; that stretch reads GPPGTGKS. G1600 carries N-myristoyl glycine; by host lipidation. Residues 1649–1669 form a helical membrane-spanning segment; it reads IFAASSFLSLIAATLTIVRCL. Positions 1677–1699 are disordered; sequence GAYSGTPVPKPRKKDLPKQPVYS. Y1679 carries the post-translational modification O-(5'-phospho-RNA)-tyrosine. In terms of domain architecture, Peptidase C3 spans 1700–1889; sequence GPVRRQGFDP…FSARLTPERV (190 aa). Residues H1748, E1779, and C1852 each act as for protease 3C activity in the active site. One can recognise a RdRp catalytic domain in the interval 2126–2243; sequence SNVWSIDYSC…GSNQDFHPRE (118 aa). Catalysis depends on for RdRp activity residues D2132 and D2229.

Interacts with capsid protein VP1. Interacts with capsid protein VP3. In terms of assembly, interacts with capsid protein VP0. Interacts with capsid protein VP3. As to quaternary structure, interacts with capsid protein VP0. Interacts with capsid protein VP1. Homodimer. Interacts with protein 2B. Interacts with protein 2C. In terms of assembly, homodimer. Interacts with host ABCD3. Interacts with protein 2A. Interacts with host ACBD3. As to quaternary structure, homodimer. Interacts with host ABCD3. Interacts with protein 2A. Interacts with protein 3A. Interacts with protein 3C. Interacts with host ACBD3. Homodimer. Interacts with host ABCD3 (via GOLD domain) and PI4KB; these interactions allow the formation of a viral protein/ACBD3/PI4KB complex in order to synthesize PI4P at the viral RNA replication sites. Interacts with protein 2C. Interacts with protein 3C. Protein 3C: Interacts with protein 2A. Protein 3C: Interacts with protein 2C. Post-translationally, specific enzymatic cleavages by the viral protease in vivo yield a variety of precursors and mature proteins. The leader protein-VP0 junction is cleaved by 3C proteinase. The VP1/2A junction is cleaved by the protein 3CD in association with protein 2A. Uridylylated by the polymerase and is covalently linked to the 5'-end of genomic RNA. This uridylylated form acts as a nucleotide-peptide primer for the polymerase.

Its subcellular location is the virion. The protein resides in the host cytoplasm. The protein localises to the host cytoplasmic vesicle membrane. It is found in the host Golgi apparatus membrane. The catalysed reaction is Selective cleavage of Gln-|-Gly bond in the poliovirus polyprotein. In other picornavirus reactions Glu may be substituted for Gln, and Ser or Thr for Gly.. It catalyses the reaction RNA(n) + a ribonucleoside 5'-triphosphate = RNA(n+1) + diphosphate. It carries out the reaction ATP + H2O = ADP + phosphate + H(+). In terms of biological role, required for viral RNA replication and viral RNA encapsidation. Does not have any proteolytic activity. Forms an icosahedral capsid of pseudo T=3 symmetry with capsid proteins VP0 and VP3. Together they form an icosahedral capsid composed of 60 copies of each VP0, VP1, and VP3. All the three latter proteins contain a beta-sheet structure called beta-barrel jelly roll. Its function is as follows. Forms an icosahedral capsid of pseudo T=3 symmetry with capsid proteins VP1 and VP3. Together they form an icosahedral capsid composed of 60 copies of each VP0, VP1, and VP3. All the three latter proteins contain a beta-sheet structure called beta-barrel jelly roll. Functionally, forms an icosahedral capsid of pseudo T=3 symmetry with capsid proteins VP0 and VP1. Together they form an icosahedral capsid composed of 60 copies of each VP0, VP1, and VP3. All the three latter proteins contain a beta-sheet structure called beta-barrel jelly roll. In terms of biological role, required for viral RNA replication. Does not have any proteolytic activity. Affects membrane integrity and causes an increase in membrane permeability. Its function is as follows. Induces and associates with structural rearrangements of intracellular membranes. Displays RNA-binding, nucleotide binding and NTPase activities. May play a role in virion morphogenesis and viral RNA encapsidation by interacting with the capsid protein VP3. Functionally, serves as membrane anchor via its hydrophobic domain. Plays an essential role in viral RNA replication by recruiting PI4KB at the viral replication sites, thereby allowing the formation of rearranged membranous structures where viral replication takes place. In terms of biological role, forms a primer, VPg-pU, which is utilized by the polymerase for the initiation of RNA chains. Cysteine protease that generates mature viral proteins from the precursor polyprotein. In addition to its proteolytic activity, it binds to viral RNA, and thus influences viral genome replication. RNA and substrate cooperatively bind to the protease. Its function is as follows. Replicates the genomic and antigenomic RNAs by recognizing replications specific signals. Performs VPg uridylylation. This is Genome polyprotein from Salivirus A (isolate Human/Nigeria/NG-J1/2007) (SV-A).